The chain runs to 304 residues: Murein tetrapeptide carboxypeptidase (304 aa).

S106 functions as the Nucleophile in the catalytic mechanism. Active-site charge relay system residues include E200 and H270.

The protein belongs to the peptidase S66 family.

It localises to the cytoplasm. The catalysed reaction is N-acetyl-D-glucosaminyl-N-acetylmuramoyl-L-alanyl-meso-2,6-diaminoheptanedioyl-D-alanine + H2O = N-acetyl-D-glucosaminyl-N-acetylmuramoyl-L-alanyl-meso-2,6-diaminoheptanedioate + D-alanine. It participates in cell wall biogenesis; peptidoglycan recycling. Functionally, releases the terminal D-alanine residue from the cytoplasmic tetrapeptide recycling product L-Ala-gamma-D-Glu-meso-Dap-D-Ala. Can also cleave D-Ala from murein derivatives containing the tetrapeptide, i.e. MurNAc-tetrapeptide, UDP-MurNAc-tetrapeptide, GlcNAc-MurNAc-tetrapeptide, and GlcNAc-anhMurNAc-tetrapeptide. Does not act on murein sacculi or cross-linked muropeptides. The tripeptides produced by the LcdA reaction can then be reused as peptidoglycan building blocks; LcdA is thereby involved in murein recycling. This chain is Murein tetrapeptide carboxypeptidase (ldcA), found in Escherichia coli O157:H7.